Consider the following 699-residue polypeptide: TPR repeat-containing thioredoxin TTL1 (699 aa).

The disordered stretch occupies residues 1-211 (MPKSVKPISE…SSSRSSSTVA (211 aa)). Residues 9-20 (SESDKLSDHLRD) show a composition bias toward basic and acidic residues. Phosphoserine is present on residues Ser39 and Ser42. 2 stretches are compositionally biased toward low complexity: residues 52–70 (TTTT…SSGS) and 83–135 (RSNS…TSPA). Over residues 166–182 (SGTGTYGHGSIMRGGGI) the composition is skewed to gly residues. Over residues 195–210 (NSPVNVGSSSRSSSTV) the composition is skewed to low complexity. TPR repeat units follow at residues 227–260 (SEEV…SPTN), 262–294 (AYRS…DPNY), 296–328 (RAHH…SDPM), 419–452 (AYIY…DPRC), 465–498 (VARA…DPCN), 499–532 (AILY…QPSY), and 534–566 (KPLL…LPHD). A Thioredoxin domain is found at 605–691 (QFKSAMNLPG…IVCPSKEVLE (87 aa)).

Expressed in the root elongation zone, stele, root cap, embryo vascular system, leaf axilar buds, silique abscission zone and guard cells.

Involved in responses to osmotic stress and abscisic acid (ABA). May act as a positive regulator of ABA signaling during germination and seedling development under stress. The chain is TPR repeat-containing thioredoxin TTL1 (TTL1) from Arabidopsis thaliana (Mouse-ear cress).